The sequence spans 215 residues: Pyrrolidone-carboxylate peptidase (215 aa).

Active-site residues include Glu80, Cys143, and His167.

This sequence belongs to the peptidase C15 family. Homotetramer.

It localises to the cytoplasm. It carries out the reaction Release of an N-terminal pyroglutamyl group from a polypeptide, the second amino acid generally not being Pro.. Removes 5-oxoproline from various penultimate amino acid residues except L-proline. The sequence is that of Pyrrolidone-carboxylate peptidase from Bacillus cereus (strain G9842).